Here is a 583-residue protein sequence, read N- to C-terminus: L-galactono-1,4-lactone dehydrogenase 2, mitochondrial (583 aa).

A mitochondrion-targeting transit peptide spans 1-36 (MRRLLLAGILRRASSSPSSHHHLHLVRALSASSPLP). The propeptide at 37–78 (ASDADLRKYAGYALLLLGCGAATYYSFPLPPDALHKKAVPFK) is removed in mature form. Residues 45 to 61 (YAGYALLLLGCGAATYY) form a helical membrane-spanning segment. The 172-residue stretch at 95–266 (THEVHTRVLL…AEVTLQCVER (172 aa)) folds into the FAD-binding PCMH-type domain.

It depends on FAD as a cofactor.

The protein localises to the mitochondrion membrane. It catalyses the reaction L-galactono-1,4-lactone + 4 Fe(III)-[cytochrome c] = L-dehydroascorbate + 4 Fe(II)-[cytochrome c] + 5 H(+). The protein operates within cofactor biosynthesis; L-ascorbate biosynthesis. Functionally, involved in the biosynthesis of ascorbic acid. This chain is L-galactono-1,4-lactone dehydrogenase 2, mitochondrial (GLDH2), found in Oryza sativa subsp. japonica (Rice).